The chain runs to 1323 residues: Glutamate receptor ionotropic, NMDA 2D (1323 aa).

An N-terminal signal peptide occupies residues 1–27; the sequence is MRGAGGPRGPRGPAKMLLLLALACASP. Over 28-579 the chain is Extracellular; that stretch reads FPEEVPGPGA…SPSAFLEPYS (552 aa). Asparagine 89 is a glycosylation site (N-linked (GlcNAc...) asparagine). A disulfide bridge links cysteine 101 with cysteine 345. 4 N-linked (GlcNAc...) asparagine glycosylation sites follow: asparagine 349, asparagine 363, asparagine 381, and asparagine 464. 2 disulfide bridges follow: cysteine 452/cysteine 480 and cysteine 459/cysteine 481. Positions 536, 538, and 543 each coordinate L-glutamate. Asparagine 566 carries N-linked (GlcNAc...) asparagine glycosylation. The chain crosses the membrane as a helical span at residues 580 to 601; that stretch reads PAVWVMMFVMCLTVVAVTVFIF. Over 602–626 the chain is Cytoplasmic; it reads EYLSPVGYNRSLATGKRPGGSTFTI. Residues 627–638 constitute an intramembrane region (discontinuously helical); sequence GKSIWLLWALVF. The pore-forming stretch occupies residues 628–647; sequence KSIWLLWALVFNNSVPVENP. Residues 639–650 are Cytoplasmic-facing; that stretch reads NNSVPVENPRGT. The chain crosses the membrane as a helical span at residues 651–671; it reads TSKIMVLVWAFFAVIFLASYT. At 672-840 the chain is on the extracellular side; that stretch reads ANLAAFMIQE…EVMSSKLDID (169 aa). Asparagine 712 carries an N-linked (GlcNAc...) asparagine glycan. Serine 714, threonine 715, and aspartate 756 together coordinate L-glutamate. A disulfide bridge connects residues cysteine 770 and cysteine 825. The chain crosses the membrane as a helical span at residues 841 to 864; sequence NMAGVFYMLLVAMGLSLLVFAWEH. Residues 865–1323 are Cytoplasmic-facing; sequence LVYWRLRHCL…AHFSSLESEV (459 aa). Disordered regions lie at residues 897 to 952, 977 to 1112, and 1201 to 1323; these read EAAP…PGGA, AAPR…SLGG, and PWAA…ESEV. Residues 899 to 929 are compositionally biased toward pro residues; sequence APPPAKPPPPPQPLPSPAYPAARPPPGPAPF. Positions 931–940 are enriched in basic and acidic residues; it reads PRERAAADRW. The span at 977 to 986 shows a compositional bias: low complexity; it reads AAPRGAAGRP. The segment covering 987 to 1001 has biased composition (pro residues); it reads LSPPTTQPPQKPPPS. Low complexity predominate over residues 1030-1039; the sequence is AAAAAAVGPP. Pro residues predominate over residues 1080–1092; the sequence is TAPPPRRAAPPPC. A compositionally biased stretch (basic residues) spans 1208 to 1228; that stretch reads PRRRARCGCPRPHPHRPRASH. The residue at position 1303 (arginine 1303) is an Omega-N-methylarginine. Serine 1313 carries the phosphoserine modification. The PDZ-binding signature appears at 1321-1323; the sequence is SEV.

Belongs to the glutamate-gated ion channel (TC 1.A.10.1) family. NR2D/GRIN2D subfamily. As to quaternary structure, heterotetramer. Forms heterotetrameric channels composed of two GluN1/zeta subunits (GRIN1), and two identical GluN2/epsilon subunits (GRIN2A, GRIN2B, GRIN2C or GRIN2D) or GluN3 subunits (GRIN3A or GRIN3B) (in vitro). In vivo, the subunit composition may depend on the expression levels of the different subunits. Interacts with PDZ domains of PATJ and DLG4. In terms of tissue distribution, expressed in brain, mainly in the subcortical region.

It is found in the cell membrane. Its subcellular location is the postsynaptic cell membrane. It carries out the reaction Ca(2+)(in) = Ca(2+)(out). The catalysed reaction is Na(+)(in) = Na(+)(out). It catalyses the reaction K(+)(in) = K(+)(out). Component of N-methyl-D-aspartate (NMDA) receptors (NMDARs) that function as heterotetrameric, ligand-gated cation channels with high calcium permeability and voltage-dependent block by Mg(2+). Participates in synaptic plasticity for learning and memory formation. Channel activation requires binding of the neurotransmitter L-glutamate to the GluN2 subunit, glycine or D-serine binding to the GluN1 subunit, plus membrane depolarization to eliminate channel inhibition by Mg(2+). NMDARs mediate simultaneously the potasium efflux and the influx of calcium and sodium. Each GluN2 subunit confers differential attributes to channel properties, including activation, deactivation and desensitization kinetics, pH sensitivity, Ca2(+) permeability, and binding to allosteric modulators. This Rattus norvegicus (Rat) protein is Glutamate receptor ionotropic, NMDA 2D.